The following is a 728-amino-acid chain: Catalase-peroxidase 1 (728 aa).

The N-terminal stretch at 1 to 16 (MDKAQHTQGKCPVAHG) is a signal peptide. Residues 97–225 (WHSAGTYRMA…LAAVMMGLIY (129 aa)) constitute a cross-link (tryptophyl-tyrosyl-methioninium (Trp-Tyr) (with M-251)). The Proton acceptor role is filled by His98. A cross-link (tryptophyl-tyrosyl-methioninium (Tyr-Met) (with W-97)) is located at residues 225–251 (YVNPEGVDGQPDPLKTAQDIRVTFERM). His266 serves as a coordination point for heme b.

The protein belongs to the peroxidase family. Peroxidase/catalase subfamily. In terms of assembly, homodimer or homotetramer. Heme b serves as cofactor. In terms of processing, formation of the three residue Trp-Tyr-Met cross-link is important for the catalase, but not the peroxidase activity of the enzyme.

It catalyses the reaction H2O2 + AH2 = A + 2 H2O. The enzyme catalyses 2 H2O2 = O2 + 2 H2O. In terms of biological role, bifunctional enzyme with both catalase and broad-spectrum peroxidase activity. This Shewanella frigidimarina (strain NCIMB 400) protein is Catalase-peroxidase 1.